The following is a 1142-amino-acid chain: E3 ubiquitin-protein ligase TRIM33 (1142 aa).

Residues 1-18 show a composition bias toward gly residues; it reads MAENKGGGEAESGGGGSG. The tract at residues 1 to 132 is disordered; the sequence is MAENKGGGEA…PGSSSGPPLG (132 aa). The interval 1 to 163 is necessary for E3 ubiquitin-protein ligase activity and repression of SMAD4 signaling and transcriptional repression; sequence MAENKGGGEA…AEPKLLPCLH (163 aa). The span at 19 to 42 shows a compositional bias: low complexity; sequence SAPVTAGAAGPTAQEAEPPLAAVL. Over residues 52-64 the composition is skewed to gly residues; sequence RAGAEGGAAGPDD. Low complexity predominate over residues 65 to 99; it reads GGVAAASSSSAPAASVPAASVGSAVPGGAASTPAP. Over residues 100–122 the composition is skewed to pro residues; it reads AAAPAPAPAPAPAPAPAPAPAPA. The RING-type zinc-finger motif lies at 141-201; sequence CAVCQQSLQS…VGVIRCPVCR (61 aa). 2 consecutive B box-type zinc fingers follow at residues 228–275 and 287–328; these read KSEQ…IRKK and QRPV…YQFL. Cys233, Cys236, Cys257, His261, Cys292, His295, Cys315, and His320 together coordinate Zn(2+). Positions 315-417 are necessary for oligomerization; it reads CQLLEHKEHR…QMKLLQQQND (103 aa). Residues 315–417 adopt a coiled-coil conformation; sequence CQLLEHKEHR…QMKLLQQQND (103 aa). Glycyl lysine isopeptide (Lys-Gly) (interchain with G-Cter in SUMO2) cross-links involve residues Lys345, Lys350, Lys497, and Lys520. The residue at position 531 (Arg531) is an Asymmetric dimethylarginine; alternate. Position 531 is an omega-N-methylarginine; alternate (Arg531). Residue Lys543 forms a Glycyl lysine isopeptide (Lys-Gly) (interchain with G-Cter in SUMO2) linkage. Arg551 carries the omega-N-methylarginine modification. Arg593 carries the post-translational modification Asymmetric dimethylarginine. Residue Arg607 is modified to Asymmetric dimethylarginine; alternate. Arg607 carries the post-translational modification Omega-N-methylarginine; alternate. 2 positions are modified to asymmetric dimethylarginine: Arg614 and Arg620. 3 disordered regions span residues 657-676, 688-707, and 718-834; these read PTSPTTATMANANRGPTSPS, NPENLPSLPDIPPIQLEDAG, and YISG…PPLS. Residues 738-774 are compositionally biased toward low complexity; the sequence is PSALSPGSSGLSNSHTPVRPPSTSSTGSRGSCGSSGR. Basic and acidic residues-rich tracts occupy residues 775–794 and 808–817; these read TAEKSAHSFKSDQVKVKQEP and KQEKTEDGRR. An N6-acetyllysine; alternate mark is found at Lys778 and Lys784. Residues Lys778 and Lys784 each participate in a glycyl lysine isopeptide (Lys-Gly) (interchain with G-Cter in SUMO2); alternate cross-link. Lys789 participates in a covalent cross-link: Glycyl lysine isopeptide (Lys-Gly) (interchain with G-Cter in SUMO2). Residues Lys791 and Lys808 each participate in a glycyl lysine isopeptide (Lys-Gly) (interchain with G-Cter in SUMO2); alternate cross-link. Residues Lys791 and Lys808 each participate in a glycyl lysine isopeptide (Lys-Gly) (interchain with G-Cter in SUMO1); alternate cross-link. Residue Lys808 is modified to N6-acetyllysine; alternate. Residue Lys811 forms a Glycyl lysine isopeptide (Lys-Gly) (interchain with G-Cter in SUMO2) linkage. A Phosphoserine modification is found at Ser818. A compositionally biased stretch (low complexity) spans 822–834; the sequence is LSSPESSLTPPLS. Thr830 carries the post-translational modification Phosphothreonine. A Glycyl lysine isopeptide (Lys-Gly) (interchain with G-Cter in SUMO2) cross-link involves residue Lys876. Ser877 is subject to Phosphoserine. The PHD-type zinc finger occupies 902–949; the sequence is EDWCAVCQNGGDLLCCEKCPKVFHLTCHVPTLLSFPSGDWICTFCRDI. Position 966 is an N6-acetyllysine (Lys966). Residue Lys968 is modified to N6-acetyllysine; alternate. Lys968 is covalently cross-linked (Glycyl lysine isopeptide (Lys-Gly) (interchain with G-Cter in SUMO2); alternate). The region spanning 972–1095 is the Bromo domain; the sequence is GLSPVDQRKC…LYFEDKLSEI (124 aa). Glycyl lysine isopeptide (Lys-Gly) (interchain with G-Cter in SUMO2) cross-links involve residues Lys1022 and Lys1058. Residue Thr1066 is modified to Phosphothreonine. A Glycyl lysine isopeptide (Lys-Gly) (interchain with G-Cter in SUMO2) cross-link involves residue Lys1072. Residues 1103–1142 form a disordered region; the sequence is PLPEFEQDEDDGEVTEDSDEDFIQPRRKRLKSDERPVHIK. Residues 1107 to 1124 are compositionally biased toward acidic residues; it reads FEQDEDDGEVTEDSDEDF. Thr1117 is modified (phosphothreonine). Ser1120 is subject to Phosphoserine. Residue Lys1133 forms a Glycyl lysine isopeptide (Lys-Gly) (interchain with G-Cter in SUMO2) linkage. Residues 1133 to 1142 are compositionally biased toward basic and acidic residues; sequence KSDERPVHIK. Residue Ser1134 is modified to Phosphoserine.

This sequence belongs to the TRIM/RBCC family. As to quaternary structure, homooligomer and heterooligomer with TRIM24 and TRIM28 family members. Interacts with SMAD4 in unstimulated cells. Found in a complex with SMAD2 and SMAD3 upon addition of TGF-beta. Interacts with SMAD2 and SMAD3. Interacts with SMAD4 under basal and induced conditions and, upon TGF-beta signaling, with activated SMAD2. Forms a ternary complex with SMAD4 and SMAD2 upon TGF-beta signaling. Sumoylated with SUMO1. In terms of tissue distribution, ubiquitous with high level in testis.

Its subcellular location is the nucleus. The enzyme catalyses S-ubiquitinyl-[E2 ubiquitin-conjugating enzyme]-L-cysteine + [acceptor protein]-L-lysine = [E2 ubiquitin-conjugating enzyme]-L-cysteine + N(6)-ubiquitinyl-[acceptor protein]-L-lysine.. It participates in protein modification; protein ubiquitination. Its function is as follows. Acts as an E3 ubiquitin-protein ligase. Promotes SMAD4 ubiquitination, nuclear exclusion and degradation via the ubiquitin proteasome pathway. May act as a transcriptional repressor. Inhibits the transcriptional response to TGF-beta/BMP signaling cascade. Plays a role in the control of cell proliferation. Its association with SMAD2 and SMAD3 stimulates erythroid differentiation of hematopoietic stem/progenitor. Monoubiquitinates SMAD4 and acts as an inhibitor of SMAD4-dependent TGF-beta/BMP signaling cascade (Monoubiquitination of SMAD4 hampers its ability to form a stable complex with activated SMAD2/3 resulting in inhibition of TGF-beta/BMP signaling cascade). The chain is E3 ubiquitin-protein ligase TRIM33 (Trim33) from Mus musculus (Mouse).